The primary structure comprises 230 residues: Ribonuclease 3 (230 aa).

In terms of domain architecture, RNase III spans 5–125 (YSRFYNILGY…VIGAIYLDSD (121 aa)). Glu-40 provides a ligand contact to Mg(2+). Residue Asp-44 is part of the active site. 2 residues coordinate Mg(2+): Asp-111 and Glu-114. The active site involves Glu-114. Residues 153–223 (DSKSKLQEIL…AEKMIEMLSQ (71 aa)) form the DRBM domain.

Belongs to the ribonuclease III family. Homodimer. Requires Mg(2+) as cofactor.

Its subcellular location is the cytoplasm. It carries out the reaction Endonucleolytic cleavage to 5'-phosphomonoester.. In terms of biological role, digests double-stranded RNA. Involved in the processing of primary rRNA transcript to yield the immediate precursors to the large and small rRNAs (23S and 16S). Processes some mRNAs, and tRNAs when they are encoded in the rRNA operon. Processes pre-crRNA and tracrRNA of type II CRISPR loci if present in the organism. This Francisella tularensis subsp. holarctica (strain LVS) protein is Ribonuclease 3.